Consider the following 205-residue polypeptide: Polyamine-modulated factor 1 (205 aa).

The disordered stretch occupies residues 1 to 30; that stretch reads MAEASSANLGSGCEEKRHEGSSSESVPPGT. A coiled-coil region spans residues 141–193; the sequence is FLQQRDTLRRHVQKQEAENQQLADAVLAGRRQVEELQLQVQAQQQAWQALHRE.

As to quaternary structure, component of the MIS12 complex composed of MIS12, DSN1, NSL1 and PMF1. Interacts with COPS7A. Interacts via its coiled-coil domain with the leucine-zipper domain of NFE2L2. The interaction with NFE2L2 is required for the transcriptional regulation of SSAT. In terms of tissue distribution, highest levels of expression in heart and skeletal muscle, with significant levels expressed in kidney and liver.

It is found in the nucleus. Its subcellular location is the chromosome. It localises to the centromere. The protein localises to the kinetochore. Its function is as follows. Part of the MIS12 complex which is required for normal chromosome alignment and segregation and kinetochore formation during mitosis. May act as a cotranscription partner of NFE2L2 involved in regulation of polyamine-induced transcription of SSAT. In Homo sapiens (Human), this protein is Polyamine-modulated factor 1.